The following is a 450-amino-acid chain: UDP-N-acetylmuramoylalanine--D-glutamate ligase (450 aa).

Residue 119 to 125 (GSNGKTT) coordinates ATP.

Belongs to the MurCDEF family.

It is found in the cytoplasm. The enzyme catalyses UDP-N-acetyl-alpha-D-muramoyl-L-alanine + D-glutamate + ATP = UDP-N-acetyl-alpha-D-muramoyl-L-alanyl-D-glutamate + ADP + phosphate + H(+). Its pathway is cell wall biogenesis; peptidoglycan biosynthesis. Its function is as follows. Cell wall formation. Catalyzes the addition of glutamate to the nucleotide precursor UDP-N-acetylmuramoyl-L-alanine (UMA). The polypeptide is UDP-N-acetylmuramoylalanine--D-glutamate ligase (Bacillus cereus (strain ATCC 14579 / DSM 31 / CCUG 7414 / JCM 2152 / NBRC 15305 / NCIMB 9373 / NCTC 2599 / NRRL B-3711)).